A 907-amino-acid polypeptide reads, in one-letter code: Probable dipeptidyl-aminopeptidase B (907 aa).

Residues 1-11 are compositionally biased toward basic and acidic residues; it reads MYDQVPYRDTD. The tract at residues 1–71 is disordered; the sequence is MYDQVPYRDT…RGKPDEDDDL (71 aa). Residues 1 to 88 are Cytoplasmic-facing; that stretch reads MYDQVPYRDT…LKPMERKVRR (88 aa). Residues 22 to 36 show a composition bias toward low complexity; it reads SDSNRSSIDTTSTTS. The chain crosses the membrane as a helical; Signal-anchor for type II membrane protein span at residues 89-109; sequence AMYLLAFLMIGGWFLALAVYV. Over 110 to 907 the chain is Vacuolar; sequence SREHFGTPDT…PLRKRNRELV (798 aa). N185 and N341 each carry an N-linked (GlcNAc...) asparagine glycan. S746 acts as the Charge relay system in catalysis. N-linked (GlcNAc...) asparagine glycosylation occurs at N800. Catalysis depends on charge relay system residues D823 and H856.

It belongs to the peptidase S9B family.

It localises to the vacuole membrane. The catalysed reaction is Release of an N-terminal dipeptide, Xaa-Yaa-|-Zaa-, from a polypeptide, preferentially when Yaa is Pro, provided Zaa is neither Pro nor hydroxyproline.. Functionally, type IV dipeptidyl-peptidase which removes N-terminal dipeptides sequentially from polypeptides having unsubstituted N-termini provided that the penultimate residue is proline. The protein is Probable dipeptidyl-aminopeptidase B (DAPB) of Tuber melanosporum (strain Mel28) (Perigord black truffle).